A 317-amino-acid polypeptide reads, in one-letter code: uncharacterized protein (317 aa).

This sequence to A.aeolicus AA11 and AA34.

This is an uncharacterized protein from Aquifex aeolicus (strain VF5).